The primary structure comprises 471 residues: Glutamate--tRNA ligase (471 aa).

The 'HIGH' region motif lies at 9–19 (PSPTGFLHVGG). Residues Cys98, Cys100, Cys125, and Asp127 each coordinate Zn(2+). Positions 237–241 (KLSKR) match the 'KMSKS' region motif. Residue Lys240 coordinates ATP.

This sequence belongs to the class-I aminoacyl-tRNA synthetase family. Glutamate--tRNA ligase type 1 subfamily. In terms of assembly, monomer. Zn(2+) is required as a cofactor.

Its subcellular location is the cytoplasm. The catalysed reaction is tRNA(Glu) + L-glutamate + ATP = L-glutamyl-tRNA(Glu) + AMP + diphosphate. Catalyzes the attachment of glutamate to tRNA(Glu) in a two-step reaction: glutamate is first activated by ATP to form Glu-AMP and then transferred to the acceptor end of tRNA(Glu). This chain is Glutamate--tRNA ligase, found in Aeromonas hydrophila subsp. hydrophila (strain ATCC 7966 / DSM 30187 / BCRC 13018 / CCUG 14551 / JCM 1027 / KCTC 2358 / NCIMB 9240 / NCTC 8049).